The sequence spans 2238 residues: MFKKLKQKISEEQQQLQQALAPAQASSSSSTPTRTRSRTSSFTDQLDDVTPNRENASTQATKSPDGVSKDESSPSQSGDTQTFAQKLQLRVPSMESLFRSPIKESLFRSSKEPLVRTSSRESLNQLDLDCSAAAFDPPSDMESEAEDAPWNSDGLSREQLLQRLRRMERSLSSYRGKYSELVTAFQTLQREKKKLQGILSQSQDKSLRRISELREELQMDQQAKKHLQDEFDACLEEKDQYISVLQTQVSLLKQRLQNGPMNVDAPKPLPPGELQAEVHGDTEKMEGVGEPVGGGTSAKTLEMLQQRVKRQENLLQRCKETIGSHKEQCALLLSEKEALQEQLDERLQELEKMKELHMAEKTKLITQLRDAKNLIEQLEQDKGMVITETKRQMLETLELKEDEIAQLRSHIKQMTTQGEELREQKEKSERAAFEELEKALSTAQKTEDAQRRMKMEMDEQMKAVERASEEERLRLQHELSRVRQEAASMAKKNSEEQVAALQKLHAEELASKEQELSRRLEARERELQEQMRIALEKSRSEYLKLTQEKEQQESLALEELELQKKAILTESENKLQELGQEAEAYRTRILELETSLEKSLQESKTQSEHLAVHLEAEKNKHNKELTALAEQHRTEVEGLQQQQDSLWTERLQSLSQQHQAAVEELREKYQQEKDALLKEKESLFQAHIQDMNEKTLEKLDKKQMELESVSSELSEALRARDQLAEELSVLRGDADKMKQALEAELEEQRRHHQREVGSISEQQELTVRRAEKALKDELSRLGALLDERDEHLRERQARVQDLEAHLQKSAGELQQALAKLDLLHSEQSAAREQAGAYEEQLAQMQQKVLDLETEKSLLTKQVVEMETHKKHVCEELDAQRAQVQQLERQRSELEEKVRSLAQLQDSQLKNSTVEKEQARQSLMEKENIILQMREEQAKEIEILKQTLSSKEESISILHEEYETKFKNQEKRMEKIKQKAKEMQETKKKLLDQEAKLKKELENTVLELSQKEKQFNAQILEMAQANSAGISDTVSRLEENQRQQIESLTGAHQRKLDDVIEAWEKKLSQQAAELRDKHAEQMEEKEQGLGELRQKVRIVQSEKEELTKEVARLKEAVSGQDVALAGLQGQLEQKSAVIVSLSERESQLQSQVEKLEADLGCSLSEKLSLQEELAELKLLADKSQLRVSELTGQVQAAEKELQSCKSLHELSKKSLEDKSLNLKSLLEELASQLDSRCERTKALLEAKTNELVCTSRDKADAILARLSQCQRHTATVGEALLRRMGQVSELEAQLTQLTEEQRTLKSSFQQVTNQLEEKEKQIKTMKADIEGLLTEKEALQQEGGQQRQAASEKESCITQLKKELAENINAVTLLREELSEKKSEIASLSKQLSDLGAQLESSISPSDKAEAISALSKQHEEQELQLQAQLQELSLKVDALSKEKMSALEQVDHWSNKFSEWKKKAQSRLAQHQSTIKDLQAQLDVKATDAREKEEQICLLKEDLDRQNKKFECLKGEMEVRKSKMEKKECDLETALKTQTARVVELEDCVTQRKKEVESLNETLKNYNQQRDTEHSGLVQRLQHLEELGEEKDNKVREAEETVLRLREHVSSLEAELGTVKKELEHVNSSVKSRDGELKALEDKLELESAAKVELKRKAEQKIAAIRKQLLSQMEEKTQRYAKDTENRLSELSAQLKEREKQVHSLEDKLKNLESSPHPEVPAVSRSMQSVAASPEQEAPDSQDCTHKACKERLCMLQRRLSEKEKLLRRLEQGEGEARPSQPEAQHRALSGKLDCTRARQLEDHVLIGCLPEELEEKMKCSLIVSQPMGEETGNNTGVKQNWASVVDSVQKTLQEKELTCQALEQRVKELESDLVRERGAHRLEVEKLTLKYEKSQSSQQEMDGENKCVEVLEDRPEENSQSHEIQSNVGTVDGLRSDLESKLTGAERDKQKLSKEVARLQKELRALRREHQQELDILKRECEQEAEEKLKQEQEDLELKHTSTLKQLMREFNTQLAQKEQELERTVQETIDKAQEVEAELLESHQEETQQLHRKIAEKEDDLRRTARRYEEILDAREEEMTGKVTDLQTQLEELQKKYQQRLEQEESTKDSVTILELQTQLAQKTTLISDSKLKEQELREQVHNLEDRLKRYEKNACAATVGTPYKGGNLYHTEVSLFGEPTEFEYLRKVMFEYMMGRETKTMAKVITTVLKFPDDQAQKILEREDARLMSWLRTSS.

The interval 1–90 (MFKKLKQKIS…QTFAQKLQLR (90 aa)) is disordered. Residue Ser-10 is modified to Phosphoserine. Positions 12 to 41 (EQQQLQQALAPAQASSSSSTPTRTRSRTSS) are enriched in low complexity. Residue Thr-39 is modified to Phosphothreonine. Ser-41 is modified (phosphoserine). Polar residues-rich tracts occupy residues 52–62 (NRENASTQATK) and 73–85 (SPSQSGDTQTFAQ). Phosphoserine occurs at positions 93 and 100. Disordered stretches follow at residues 132 to 154 (AAAFDPPSDMESEAEDAPWNSDG), 1695 to 1744 (LKER…SQDC), and 1770 to 1789 (LEQGEGEARPSQPEAQHRAL). The interaction with MACF1 stretch occupies residues 154–224 (GLSREQLLQR…EELQMDQQAK (71 aa)). Positions 156–2161 (SREQLLQRLR…RYEKNACAAT (2006 aa)) form a coiled coil. The span at 1695-1711 (LKEREKQVHSLEDKLKN) shows a compositional bias: basic and acidic residues. One can recognise a GRIP domain in the interval 2178–2225 (LFGEPTEFEYLRKVMFEYMMGRETKTMAKVITTVLKFPDDQAQKILER).

As to quaternary structure, homodimer. Interacts with GTP-bound ARL1 and ARL3. Interacts with MACF1. Directly interacts with TBC1D23. Interacts with FAM91A1; this interaction may be mediated by TBC1D23. As to expression, ubiquitous. Highly expressed in oligodendrocyte precursors, particularly at a stage just prior to myelination.

It localises to the cytoplasm. It is found in the golgi apparatus membrane. The protein resides in the golgi apparatus. Its subcellular location is the trans-Golgi network membrane. Its function is as follows. Involved in vesicular trafficking at the Golgi apparatus level. May play a role in delivery of transport vesicles containing GPI-linked proteins from the trans-Golgi network through its interaction with MACF1. Involved in endosome-to-Golgi trafficking. The sequence is that of Golgin subfamily A member 4 (Golga4) from Mus musculus (Mouse).